The following is an 89-amino-acid chain: Small ribosomal subunit protein bS20 (89 aa).

It belongs to the bacterial ribosomal protein bS20 family.

Binds directly to 16S ribosomal RNA. This chain is Small ribosomal subunit protein bS20, found in Helicobacter pylori (strain P12).